Consider the following 135-residue polypeptide: Ribonuclease P protein component (135 aa).

This sequence belongs to the RnpA family. In terms of assembly, consists of a catalytic RNA component (M1 or rnpB) and a protein subunit.

The catalysed reaction is Endonucleolytic cleavage of RNA, removing 5'-extranucleotides from tRNA precursor.. RNaseP catalyzes the removal of the 5'-leader sequence from pre-tRNA to produce the mature 5'-terminus. It can also cleave other RNA substrates such as 4.5S RNA. The protein component plays an auxiliary but essential role in vivo by binding to the 5'-leader sequence and broadening the substrate specificity of the ribozyme. This chain is Ribonuclease P protein component, found in Xylella fastidiosa (strain 9a5c).